The primary structure comprises 213 residues: ATP-dependent dethiobiotin synthetase BioD (213 aa).

13 to 18 lines the ATP pocket; the sequence is GIGKTV. Residue Thr17 coordinates Mg(2+). Residue Lys33 is part of the active site. A Mg(2+)-binding site is contributed by Glu100. ATP contacts are provided by residues 100-103 and 184-186; these read EGAG and PHL.

The protein belongs to the dethiobiotin synthetase family. In terms of assembly, homodimer. Mg(2+) serves as cofactor.

Its subcellular location is the cytoplasm. It catalyses the reaction (7R,8S)-7,8-diammoniononanoate + CO2 + ATP = (4R,5S)-dethiobiotin + ADP + phosphate + 3 H(+). It functions in the pathway cofactor biosynthesis; biotin biosynthesis; biotin from 7,8-diaminononanoate: step 1/2. Catalyzes a mechanistically unusual reaction, the ATP-dependent insertion of CO2 between the N7 and N8 nitrogen atoms of 7,8-diaminopelargonic acid (DAPA, also called 7,8-diammoniononanoate) to form a ureido ring. In Rhodopseudomonas palustris (strain BisA53), this protein is ATP-dependent dethiobiotin synthetase BioD.